We begin with the raw amino-acid sequence, 243 residues long: RNA-binding protein with serine-rich domain 1 homolog (243 aa).

Residues 48–92 are disordered; that stretch reads SSTRQFNNTRSPSGRSASRSSNFSHRSSSRDSFSSNRSYSSSLSR. Residues 57 to 92 show a composition bias toward low complexity; it reads RSPSGRSASRSSNFSHRSSSRDSFSSNRSYSSSLSR. Residues 99 to 177 enclose the RRM domain; it reads RTILVENLTR…EELFVSIKRF (79 aa). A disordered region spans residues 189–243; sequence YENSYRPSRSQNNSHYNDKSFHRSRYSRARSRSPGSNISEYSDQSPPYHSYRHRP. The segment covering 193–203 has biased composition (polar residues); sequence YRPSRSQNNSH. Positions 210-219 are enriched in basic residues; it reads HRSRYSRARS. A compositionally biased stretch (polar residues) spans 222-235; the sequence is PGSNISEYSDQSPP.

It belongs to the splicing factor SR family. In terms of assembly, component of the active spliceosome.

The protein localises to the cytoplasm. It localises to the nucleus. Functionally, putative component of the spliceosome which enhances the formation of the ATP-dependent A complex of the spliceosome. may participate in mRNA 3'-end cleavage. Also mediates increase of mRNA abundance and translational efficiency. The protein is RNA-binding protein with serine-rich domain 1 homolog of Schizosaccharomyces pombe (strain 972 / ATCC 24843) (Fission yeast).